We begin with the raw amino-acid sequence, 430 residues long: MRLEVGNIFIKDIQFGDSTKVENGVLYVNKQELISELSSDEHIKSIDMEIVRPGESVRIAPVKDVIEPRVKVEGNGGIFPGFLSKVDTVGEGKTNVLKGAAVVTTGKVVGFQEGIIDMTGPGADYTPFSKTCNVVIIAEPVDGLKQHDHEAALRMVGLKAGKYLGEAGRNITPDEVKVYETKPIFESVKEYPNLPKVAYVYMLQTQGLLHDTYVYGVDAKKIIPTLIYPTEVMDGAILSGNCVSACDKNPTYVHMNNPVIHDLYELHGKEYNFVGVIITNENVYLADKERSSNWTAKMAEYLGLDGVIISEEGFGNPDTDLIMNCKKITKKGIKTVILTDEYAGRDGASQSLADADAAADACVTGGNANMTIVLPKLDKIIGHVSKDVIDVIAGGFDGSLRADGSIEVEIQAITGATSEVGFNKMTAKTY.

Cysteine 242 serves as the catalytic Schiff-base intermediate with substrate; via pyruvic acid. Position 242 is a pyruvic acid (Cys) (cysteine 242).

Heterohexamer of two alpha, two beta and two gamma subunits. Component of the glycine reductase complex, together with components A and C. PB is substrate specific. The peptide chain is cleaved into beta and alpha chains, and the alpha chain N-terminal cysteine is deaminated and oxidized to form a reactive pyruvoyl group.

The enzyme catalyses acetyl phosphate + [thioredoxin]-disulfide + NH4(+) + H2O = [thioredoxin]-dithiol + glycine + phosphate + H(+). Functionally, in the first step of glycine reductase, the substrate is bound to component PB via a Schiff base intermediate. Then the PB-activated substrate is nucleophilically attacked by the selenol anion of component PA to transform it to a carboxymethylated selenoether and the respective amine. By action of component PC, acetyl phosphate is formed, leaving component PA in its oxidized state. Finally component PA becomes reduced by the thioredoxin system to start a new catalytic cycle of reductive deamination. This chain is Glycine reductase complex component B subunits alpha and beta (grdE), found in Acetoanaerobium sticklandii (strain ATCC 12662 / DSM 519 / JCM 1433 / CCUG 9281 / NCIMB 10654 / HF) (Clostridium sticklandii).